We begin with the raw amino-acid sequence, 130 residues long: Small ribosomal subunit protein uS9 (130 aa).

Belongs to the universal ribosomal protein uS9 family.

This Pasteurella multocida (strain Pm70) protein is Small ribosomal subunit protein uS9.